The sequence spans 514 residues: Contact site A protein (514 aa).

The signal sequence occupies residues 1–19 (MKFLLVLIILYNILNSAHS). A globular region spans residues 20-453 (APTITAVSNG…EATTSTTYTI (434 aa)). Residues 21–104 (PTITAVSNGK…TGGNGLFKYT (84 aa)) enclose the IPT/TIG 1 domain. N-linked (GlcNAc...) asparagine glycosylation is found at Asn128, Asn137, Asn207, Asn294, and Asn399. In terms of domain architecture, IPT/TIG 2 spans 191 to 283 (PTITSITPLA…NQQPITFTYN (93 aa)). Low complexity-rich tracts occupy residues 446–475 (TTSTTYTIPDTPTPTDTATPSPTPTETATP) and 483–494 (STPEETEAPSSA). Residues 446–494 (TTSTTYTIPDTPTPTDTATPSPTPTETATPSPTPKPTSTPEETEAPSSA) form a disordered region. 2 repeat units span residues 462–469 (TATPSPTP) and 472–479 (TATPSPTP). Residues 462–479 (TATPSPTPTETATPSPTP) form a 2 X 8 AA repeats, Pro-rich region. The GPI-like-anchor amidated serine moiety is linked to residue Ser492. A propeptide spans 493-514 (SATTLISPLSLIVIFISFVLLI) (removed in mature form).

Post-translationally, phosphorylated on serine and N-glycosylated with two types of oligosaccharide chains. The GPI-like-anchor contains a phosphoceramide group, rather than a phosphatidyl group.

It is found in the cell membrane. In terms of biological role, this cell-surface glycoprotein mediates cell-cell binding via homophilic interaction. The chain is Contact site A protein (csaA) from Dictyostelium discoideum (Social amoeba).